A 1188-amino-acid chain; its full sequence is Adenomatous polyposis coli protein-related protein 1 (1188 aa).

The interval 1–50 is disordered; it reads MSSSSSDENETTIHRTGSNTGGSGIYSQPRAGSSKRTSNVRHDVSDVDDE. The required for interaction with bar-1 and hmp-2 stretch occupies residues 1 to 486; it reads MSSSSSDENE…LSLRATRASP (486 aa). The ARM repeat unit spans residues 314–358; it reads NCLKVLASLLSPDARFTSLVDSATGILKYVSQYLANTSTHLELRS. Low complexity predominate over residues 579 to 588; that stretch reads IQQQQQMQKA. Disordered stretches follow at residues 579-624, 670-702, 726-751, 778-952, 1003-1092, and 1157-1181; these read IQQQ…SMNP, TESE…DGAT, TPNG…GPSL, QSEM…TMRF, CSMI…LKDK, and YQKP…PNPK. The interval 600–1188 is required for interaction with pry-1; it reads DLDIPTSTVM…NPKQMLVTIV (589 aa). Composition is skewed to polar residues over residues 604–624 and 677–701; these read PTST…SMNP and LTSQ…SDGA. Composition is skewed to polar residues over residues 778-788 and 800-811; these read QSEMPTSSSTP and FSPTQKTTSSPA. Basic and acidic residues-rich tracts occupy residues 832–843 and 871–900; these read RRQDASDADRLL and EPER…DHNG. Composition is skewed to polar residues over residues 909–929, 937–946, 1014–1039, and 1164–1180; these read WSPQ…SSED, EPNSSTSGAA, QRNE…SASS, and GRNN…TPNP.

This sequence belongs to the adenomatous polyposis coli (APC) family. In terms of assembly, interacts (via N-terminus) with bar-1 and hmp-2; the interaction with hmp-2 is relatively weak. Interacts (via C-terminus) with pry-1 (via N-terminus). Probably associates with bar-1, gsk-3, pry-1 in a complex. As to expression, during the L1 stage, expressed in vulval precursor cells (P3-8.p), seam cells and excretory cells.

The protein localises to the cell junction. The protein resides in the adherens junction. It localises to the cytoplasm. Its subcellular location is the nucleus. Its function is as follows. Has a role in endoderm cell specification and pharyngeal development. Required for the migration of epithelial cells, organization of the anterior seam cells and ceh-13 expression during embryo morphogenesis. Prevents hyperactivation of the Wnt signaling pathway during endoderm development, probably by preventing hmp-2 nuclear translocation. During larval development, apr-1 is required for expression of lin-39 in P3-8.p. Shown to negatively regulate Wnt signaling in vulval precursor cells. Has a role in cell division by establishing the polarity of the mother cell which forms the asymmetries of the daughter nuclei. During the L4 larval stage, it is required for the asymmetric division and self-renewal of seam cells. Thought to regulate export of wrm-1 from the nucleus possibly as part of a complex involving pry-1. The chain is Adenomatous polyposis coli protein-related protein 1 from Caenorhabditis elegans.